We begin with the raw amino-acid sequence, 435 residues long: Eukaryotic peptide chain release factor subunit 1 (435 aa).

It belongs to the eukaryotic release factor 1 family. As to quaternary structure, heterodimer of two subunits, one of which binds GTP.

It localises to the cytoplasm. In terms of biological role, directs the termination of nascent peptide synthesis (translation) in response to the termination codons UAA, UAG and UGA. The polypeptide is Eukaryotic peptide chain release factor subunit 1 (SU2) (Podospora anserina (Pleurage anserina)).